Here is a 478-residue protein sequence, read N- to C-terminus: Aspartate ammonia-lyase (478 aa).

Residues T109, S148, T149, N150, and T195 each contribute to the L-aspartate site. Residues 326–335 (GSSIMPGKVN) form an SS loop region. Catalysis depends on S327, which acts as the Proton acceptor. L-aspartate-binding residues include S328 and K333.

The protein belongs to the class-II fumarase/aspartase family. Aspartase subfamily. In terms of assembly, homotetramer.

The catalysed reaction is L-aspartate = fumarate + NH4(+). Catalyzes the reversible conversion of L-aspartate to fumarate and ammonia. In Pseudomonas fluorescens, this protein is Aspartate ammonia-lyase.